We begin with the raw amino-acid sequence, 88 residues long: NADH-ubiquinone oxidoreductase chain 4L (88 aa).

3 helical membrane-spanning segments follow: residues 1–21, 22–42, and 55–75; these read MNLS…NRKN, IILM…LVLM, and FSIY…SILV.

This sequence belongs to the complex I subunit 4L family.

It is found in the mitochondrion membrane. It catalyses the reaction a ubiquinone + NADH + 5 H(+)(in) = a ubiquinol + NAD(+) + 4 H(+)(out). Functionally, core subunit of the mitochondrial membrane respiratory chain NADH dehydrogenase (Complex I) that is believed to belong to the minimal assembly required for catalysis. Complex I functions in the transfer of electrons from NADH to the respiratory chain. The immediate electron acceptor for the enzyme is believed to be ubiquinone. The polypeptide is NADH-ubiquinone oxidoreductase chain 4L (ND4L) (Schizophyllum commune (Split gill fungus)).